An 807-amino-acid chain; its full sequence is 85/88 kDa calcium-independent phospholipase A2 (807 aa).

Serine 13 is subject to Phosphoserine. ANK repeat units follow at residues 120–147, 151–181, 185–215, 219–248, 251–281, 286–312, 316–345, 349–378, and 382–403; these read WTVT…ANST, EGCT…QMDV, KGET…GLNQ, QGLT…RCNI, PGGF…QIHS, YGAS…DVDS, SGNT…NAGA, HGNT…EVDT, and FGET…KALL. Transmembrane regions (helical) follow at residues 481 to 501 and 512 to 532; these read LLCL…LIAI and LFDW…ILHS. The 185-residue stretch at 482-666 folds into the PNPLA domain; it reads LCLDGGGVKG…LANNPTLDAM (185 aa). The short motif at 486-491 is the GXGXXG element; the sequence is GGGVKG. Residues 518–522 carry the GXSXG motif; sequence GTSTG. Residue serine 520 is the Nucleophile of the active site. Aspartate 653 serves as the catalytic Proton acceptor. Residues 653 to 655 carry the DGA/G motif; that stretch reads DGG. The interval 678–687 is calmodulin-binding (1-9-14 motif); that stretch reads RKGQGNKVKK. Positions 749 to 760 are calmodulin-binding (IQ motif); that stretch reads AWCEMVGIQYFR.

Homodimer formed by catalytic domains tightly interacting through a large hydrophobic interface. The contact area involves 3 alpha helices, several loops and a part of the beta sheet from each monomer. Both active sites of the dimer are in close proximity adopting an open conformation that provide sufficient space for phospholipid access and favoring cooperativity in deacylation-reacylation reactions. Each monomer has 9 ankyrin repeats stacked side-by-side in an elongated structure oriented outwards from the catalytic core. In terms of tissue distribution, expressed in neurons of central and peripheral nervous system. Highly expressed in Purkinje cells in cerebellum and dorsal and ventral horn neurons in the spinal cord. Expressed in testis (at protein level). Expressed in skeletal muscle (at protein level).

It is found in the cytoplasm. The protein resides in the cell membrane. The protein localises to the mitochondrion. It localises to the cell projection. Its subcellular location is the pseudopodium. It catalyses the reaction a 1,2-diacyl-sn-glycero-3-phosphocholine + H2O = a 1-acyl-sn-glycero-3-phosphocholine + a fatty acid + H(+). It carries out the reaction a 1-O-alkyl-2-acyl-sn-glycero-3-phosphocholine + H2O = a 1-O-alkyl-sn-glycero-3-phosphocholine + a fatty acid + H(+). The enzyme catalyses 1,2-dihexadecanoyl-sn-glycero-3-phosphocholine + H2O = 1-hexadecanoyl-sn-glycero-3-phosphocholine + hexadecanoate + H(+). The catalysed reaction is 1-hexadecanoyl-2-(9Z-octadecenoyl)-sn-glycero-3-phosphocholine + H2O = 1-hexadecanoyl-sn-glycero-3-phosphocholine + (9Z)-octadecenoate + H(+). It catalyses the reaction 1-hexadecanoyl-2-(9Z,12Z-octadecadienoyl)-sn-glycero-3-phosphocholine + H2O = (9Z,12Z)-octadecadienoate + 1-hexadecanoyl-sn-glycero-3-phosphocholine + H(+). It carries out the reaction 1-hexadecanoyl-2-(5Z,8Z,11Z,14Z-eicosatetraenoyl)-sn-glycero-3-phosphocholine + H2O = 1-hexadecanoyl-sn-glycero-3-phosphocholine + (5Z,8Z,11Z,14Z)-eicosatetraenoate + H(+). The enzyme catalyses 1-octadecanoyl-2-(5Z,8Z,11Z,14Z-eicosatetraenoyl)-sn-glycero-3-phosphocholine + H2O = 1-octadecanoyl-sn-glycero-3-phosphocholine + (5Z,8Z,11Z,14Z)-eicosatetraenoate + H(+). The catalysed reaction is 1-hexadecanoyl-2-(5Z,8Z,11Z,14Z-eicosatetraenoyl)-sn-glycero-3-phosphoethanolamine + H2O = 1-hexadecanoyl-sn-glycero-3-phosphoethanolamine + (5Z,8Z,11Z,14Z)-eicosatetraenoate + H(+). It catalyses the reaction 1,2-dihexadecanoyl-sn-glycero-3-phosphate + H2O = 1-hexadecanoyl-sn-glycero-3-phosphate + hexadecanoate + H(+). It carries out the reaction a 1-acyl-sn-glycero-3-phosphocholine + H2O = sn-glycerol 3-phosphocholine + a fatty acid + H(+). The enzyme catalyses 1-hexadecanoyl-sn-glycero-3-phosphocholine + H2O = sn-glycerol 3-phosphocholine + hexadecanoate + H(+). The catalysed reaction is 1-(5Z,8Z,11Z,14Z-eicosatetraenoyl)-sn-glycero-3-phosphocholine + H2O = sn-glycerol 3-phosphocholine + (5Z,8Z,11Z,14Z)-eicosatetraenoate + H(+). It catalyses the reaction 2-(5Z,8Z,11Z,14Z)-eicosatetraenoyl-sn-glycero-3-phosphocholine + H2O = sn-glycerol 3-phosphocholine + (5Z,8Z,11Z,14Z)-eicosatetraenoate + H(+). It carries out the reaction 1-O-hexadecyl-2-(5Z,8Z,11Z,14Z)-eicosatetraenoyl-sn-glycero-3-phosphocholine + H2O = 1-O-hexadecyl-sn-glycero-3-phosphocholine + (5Z,8Z,11Z,14Z)-eicosatetraenoate + H(+). The enzyme catalyses 1-O-hexadecyl-2-acetyl-sn-glycero-3-phosphocholine + H2O = 1-O-hexadecyl-sn-glycero-3-phosphocholine + acetate + H(+). The catalysed reaction is hexadecanoyl-CoA + H2O = hexadecanoate + CoA + H(+). It catalyses the reaction 1',3'-bis[1,2-di-(9Z-octadecenoyl)-sn-glycero-3-phospho]-glycerol + H2O = 1'-[1,2-di-(9Z-octadecenoyl)-sn-glycero-3-phospho]-3'-[1-(9Z-octadecenoyl)-sn-glycero-3-phospho]-glycerol + (9Z)-octadecenoate + H(+). It carries out the reaction 1'-[1,2-di-(9Z-octadecenoyl)-sn-glycero-3-phospho]-3'-[1-(9Z-octadecenoyl)-sn-glycero-3-phospho]-glycerol + H2O = 1',3'-bis-[1-(9Z-octadecenoyl)-sn-glycero-3-phospho]-glycerol + (9Z)-octadecenoate + H(+). The enzyme catalyses 1',3'-bis-[1,2-di-(9Z,12Z-octadecadienoyl)-sn-glycero-3-phospho]-glycerol + H2O = 1'-[1,2-di-(9Z,12Z-octadecadienoyl)-sn-glycero-3-phospho]-3'-[1-(9Z,12Z-octadecadienoyl)-sn-glycero-3-phospho]-glycerol + (9Z,12Z)-octadecadienoate + H(+). The catalysed reaction is 1-octadecanoyl-2-(15-hydroxy-(5Z,8Z,11Z,13E)-eicosatetraenoyl)-sn-glycero-3-phosphoethanolamine + H2O = 1-octadecanoyl-sn-glycero-3-phosphoethanolamine + 15-hydroxy-(5Z,8Z,11Z,13E)-eicosatetraenoate + H(+). Its activity is regulated as follows. Inhibited by calcium-activated calmodulin. Activated by ATP. Inhibited by bromoenol lactone (BEL). Its function is as follows. Calcium-independent phospholipase involved in phospholipid remodeling with implications in cellular membrane homeostasis, mitochondrial integrity and signal transduction. Hydrolyzes the ester bond of the fatty acyl group attached at sn-1 or sn-2 position of phospholipids (phospholipase A1 and A2 activity respectively), producing lysophospholipids that are used in deacylation-reacylation cycles. Hydrolyzes both saturated and unsaturated long fatty acyl chains in various glycerophospholipid classes such as phosphatidylcholines, phosphatidylethanolamines and phosphatidates, with a preference for hydrolysis at sn-2 position. Can further hydrolyze lysophospholipids carrying saturated fatty acyl chains (lysophospholipase activity). Upon oxidative stress, contributes to remodeling of mitochondrial phospholipids in pancreatic beta cells, in a repair mechanism to reduce oxidized lipid content. Preferentially hydrolyzes oxidized polyunsaturated fatty acyl chains from cardiolipins, yielding monolysocardiolipins that can be reacylated with unoxidized fatty acyls to regenerate native cardiolipin species. Hydrolyzes oxidized glycerophosphoethanolamines present in pancreatic islets, releasing oxidized polyunsaturated fatty acids such as hydroxyeicosatetraenoates (HETEs). Has thioesterase activity toward fatty-acyl CoA releasing CoA-SH known to facilitate fatty acid transport and beta-oxidation in mitochondria particularly in skeletal muscle. Plays a role in regulation of membrane dynamics and homeostasis. Selectively hydrolyzes sn-2 arachidonoyl group in plasmalogen phospholipids, structural components of lipid rafts and myelin. Regulates F-actin polymerization at the pseudopods, which is required for both speed and directionality of MCP1/CCL2-induced monocyte chemotaxis. Targets membrane phospholipids to produce potent lipid signaling messengers. Generates lysophosphatidate (LPA, 1-acyl-glycerol-3-phosphate), which acts via G-protein receptors in various cell types. Has phospholipase A2 activity toward platelet-activating factor (PAF, 1-O-alkyl-2-acetyl-sn-glycero-3-phosphocholine), likely playing a role in inactivation of this potent pro-inflammatory signaling lipid. In response to glucose, amplifies calcium influx in pancreatic beta cells to promote INS secretion. In Mus musculus (Mouse), this protein is 85/88 kDa calcium-independent phospholipase A2 (Pla2g6).